A 111-amino-acid chain; its full sequence is Disintegrin lebein-1-alpha (111 aa).

The first 20 residues, 1 to 20 (MIQVLLVTICLAVFPYQGSS), serve as a signal peptide directing secretion. Positions 21–47 (IILESGNVNDYEIVYPKKVTVLPTGAM) are excised as a propeptide. The Disintegrin domain occupies 47 to 111 (MNSGNPCCDP…SDCPRNPYKD (65 aa)). Intrachain disulfides connect Cys53/Cys76, Cys67/Cys73, Cys72/Cys97, and Cys85/Cys104. The short motif at 89–91 (RGD) is the Cell attachment site element.

It belongs to the disintegrin family. Dimeric disintegrin subfamily. As to quaternary structure, heterodimer with subunit beta; disulfide-linked. In terms of tissue distribution, expressed by the venom gland.

The protein localises to the secreted. Its function is as follows. Strongly inhibits ADP-induced platelet aggregation on human platelet-rich plasma. Also avidly binds to the laminin-binding beta-1 integrins (alpha-3/beta-1, alpha-6/beta-1, and alpha-7/beta-1) in an RGD-independent manner. This is Disintegrin lebein-1-alpha from Macrovipera lebetinus (Levantine viper).